Here is a 565-residue protein sequence, read N- to C-terminus: Salicyl-AMP ligase / salicyl-S-ArCP synthetase (565 aa).

The ATP site is built by glycine 214, glycine 330, valine 352, aspartate 436, arginine 451, and lysine 542.

It belongs to the ATP-dependent AMP-binding enzyme family.

It catalyses the reaction salicylate + ATP + H(+) = 2-hydroxybenzoyl-5'-AMP + diphosphate. It carries out the reaction 2-hydroxybenzoyl-5'-AMP + holo-[ACP] = salicyl-[ACP] + AMP + H(+). The protein operates within siderophore biosynthesis; mycobactin biosynthesis. Inhibited by salicyl-AMS, an acyl-AMP analog. Also inhibited by 5'-O-[(N-acyl)sulfamoyl]adenosines. Its function is as follows. Involved in the initial steps of the mycobactin biosynthetic pathway. Catalyzes the salicylation of the aryl carrier protein (ArCP) domain of MbtB through a two-step reaction. The first step is the ATP-dependent adenylation of salicylate to generate a salicyl-AMP intermediate. The second step is the transfer of this activated salicylate to MbtB to form a salicyl-ArCP domain thioester. This is Salicyl-AMP ligase / salicyl-S-ArCP synthetase from Mycobacterium tuberculosis (strain ATCC 25618 / H37Rv).